Reading from the N-terminus, the 313-residue chain is MLKMESTQQMASSIINSSFEAAVVAATSTLELMGIQYDYNEVYTRVKSKFDLVMDDSGVKNNLIGKAITIDQALNGKFSSAIRNRNWMTDSRTVAKLDEDVNKLRIMLSSKGIDQKMRVLNACFSVKRIPGKSSSIVKCTRLMKDKLERGEVEVDDSFVEEKMEVDTIDWKSRYEQLEKRFESLKHRVNEKYNHWVLKARKVNENMNSLQNVISQQQAHINELQMYNNKLERDLQSKIGSVVSSIEWYLRSMELSDDVKSDIEQQLNSIDQLNPVNAIDDFESILRNLISDYDRLFIMFKGLLQQCNYTYTYE.

The interval methionine 1–arginine 149 is RNA-binding. Residues glycine 150–methionine 206 are dimerization. Residues aspartate 166–lysine 237 adopt a coiled-coil conformation. Residues tryptophan 170–leucine 234 are interaction with host ZC3H7B. Positions serine 208–glutamate 313 are interaction with host EIF4G1.

This sequence belongs to the rotavirus NSP3 family. In terms of assembly, homodimer. Interacts (via the coiled-coil region) with host ZC3H7B (via LD motif). Interacts with host EIF4G1.

It localises to the host cytoplasm. Plays an important role in stimulating the translation of viral mRNAs. These mRNAs are capped but not polyadenylated, instead terminating in a conserved sequence 'GACC' at the 3' that is recognized by NSP3, which competes with host PABPC1 for EIF4G1 binding. The interaction between NSP3 and host EIF4G1 stabilizes the EIF4E-EIF4G1 interaction, thereby facilitating the initiation of capped mRNA translation. This chain is Non-structural protein 3, found in Rotavirus A (strain RVA/Monkey/United States/RRV/1975/G3P5B[3]) (RV-A).